The chain runs to 116 residues: Iron-sulfur cluster insertion protein ErpA (116 aa).

Iron-sulfur cluster contacts are provided by Cys-44, Cys-108, and Cys-110.

Belongs to the HesB/IscA family. In terms of assembly, homodimer. It depends on iron-sulfur cluster as a cofactor.

Required for insertion of 4Fe-4S clusters for at least IspG. The sequence is that of Iron-sulfur cluster insertion protein ErpA from Shewanella halifaxensis (strain HAW-EB4).